We begin with the raw amino-acid sequence, 428 residues long: Phosphomethylpyrimidine synthase 2 (428 aa).

Substrate is bound by residues methionine 94, tyrosine 123, histidine 162, 184–186 (SRG), 225–228 (NGMR), and glutamate 264. Zn(2+) is bound at residue histidine 268. Tyrosine 291 contributes to the substrate binding site. Residue histidine 332 participates in Zn(2+) binding. The [4Fe-4S] cluster site is built by cysteine 408, cysteine 411, and cysteine 415.

It belongs to the ThiC family. The cofactor is [4Fe-4S] cluster.

It catalyses the reaction 5-amino-1-(5-phospho-beta-D-ribosyl)imidazole + S-adenosyl-L-methionine = 4-amino-2-methyl-5-(phosphooxymethyl)pyrimidine + CO + 5'-deoxyadenosine + formate + L-methionine + 3 H(+). It participates in cofactor biosynthesis; thiamine diphosphate biosynthesis. Functionally, catalyzes the synthesis of the hydroxymethylpyrimidine phosphate (HMP-P) moiety of thiamine from aminoimidazole ribotide (AIR) in a radical S-adenosyl-L-methionine (SAM)-dependent reaction. This Methanosarcina acetivorans (strain ATCC 35395 / DSM 2834 / JCM 12185 / C2A) protein is Phosphomethylpyrimidine synthase 2.